Reading from the N-terminus, the 328-residue chain is Carbonic anhydrase, chloroplastic (328 aa).

The segment covering Met1–Ser15 has biased composition (low complexity). The tract at residues Met1–Leu26 is disordered. A chloroplast-targeting transit peptide spans Met1–Met70.

This sequence belongs to the beta-class carbonic anhydrase family. As to quaternary structure, homohexamer.

It localises to the plastid. Its subcellular location is the chloroplast stroma. The enzyme catalyses hydrogencarbonate + H(+) = CO2 + H2O. In terms of biological role, reversible hydration of carbon dioxide. In Pisum sativum (Garden pea), this protein is Carbonic anhydrase, chloroplastic.